The chain runs to 369 residues: uncharacterized protein (369 aa).

Low complexity predominate over residues 110–121; it reads ARPTDAFGAPIA. The interval 110–172 is disordered; the sequence is ARPTDAFGAP…PPPPASGGGA (63 aa). Residues 122 to 136 are compositionally biased toward pro residues; the sequence is PSEPTPASAPSPPKA.

This is an uncharacterized protein from Lymantria dispar multicapsid nuclear polyhedrosis virus (LdMNPV).